We begin with the raw amino-acid sequence, 76 residues long: Kappa-actitoxin-Avd4d (76 aa).

The N-terminal stretch at 1 to 19 (MNKALFLCLVVLCAAVVFA) is a signal peptide. Residues 20 to 31 (AEDLQKAKHVPF) constitute a propeptide that is removed on maturation. Intrachain disulfides connect cysteine 37/cysteine 72, cysteine 39/cysteine 65, and cysteine 55/cysteine 73.

The protein belongs to the sea anemone type 3 (BDS) potassium channel toxin family. In terms of tissue distribution, moderately expressed in the ectodermal tissue from the distal and proximal tentacles, body wall, and oral disk.

It is found in the secreted. The protein localises to the nematocyst. Blocks Kv3 voltage-gated potassium channels. Reduces blood pressure. This chain is Kappa-actitoxin-Avd4d, found in Anemonia viridis (Snakelocks anemone).